The sequence spans 606 residues: Zinc metalloproteinase-disintegrin-like HF3 (606 aa).

The N-terminal stretch at 1–20 (MIQVLLVTICLAAFPYQGSS) is a signal peptide. A propeptide spanning residues 21–190 (IILESGNVND…KKASQLVVTA (170 aa)) is cleaved from the precursor. The Peptidase M12B domain maps to 199–395 (KYIELVILAD…YKPQCILNEP (197 aa)). Ca(2+) is bound at residue Glu202. Asn259 carries an N-linked (GlcNAc...) asparagine glycan. A Ca(2+)-binding site is contributed by Asp286. Disulfide bonds link Cys310/Cys390, Cys350/Cys374, and Cys352/Cys357. N-linked (GlcNAc...) asparagine glycosylation is present at Asn313. His335 is a Zn(2+) binding site. Residue Glu336 is part of the active site. Positions 339 and 345 each coordinate Zn(2+). The N-linked (GlcNAc...) asparagine glycan is linked to Asn373. Residues Cys390, Asn393, Val405, Asn408, Leu410, Glu412, Glu415, and Asp418 each contribute to the Ca(2+) site. The Disintegrin domain maps to 403-489 (PPVCGNELLE…DCPTDDFKRN (87 aa)). Intrachain disulfides connect Cys406-Cys435, Cys417-Cys430, Cys419-Cys425, Cys429-Cys452, Cys443-Cys449, Cys448-Cys474, Cys461-Cys481, Cys468-Cys500, Cys493-Cys505, Cys512-Cys562, Cys527-Cys569, Cys540-Cys550, Cys557-Cys594, and Cys588-Cys599. The D/ECD-tripeptide motif lies at 467 to 469 (ECD). Asp469, Glu472, and Asp484 together coordinate Ca(2+). Asn519 is a glycosylation site (N-linked (GlcNAc...) asparagine). N-linked (GlcNAc...) asparagine glycosylation is present at Asn584.

It belongs to the venom metalloproteinase (M12B) family. P-III subfamily. P-IIIa sub-subfamily. As to quaternary structure, monomer. Zn(2+) is required as a cofactor. As to expression, expressed by the venom gland.

It localises to the secreted. The metalloproteinase-disintegrin-like HF3 is a potent hemorrhagic toxin that activates macrophages for phagocytosis through integrin alpha-M/beta-2 (ITGAM/ITGB2). It inhibits collagen-induced platelet aggregation. This protein shows cleavage specificity for substrate for leucine at P1' position, followed by hydrophobic residues in P2'. This Bothrops jararaca (Jararaca) protein is Zinc metalloproteinase-disintegrin-like HF3.